A 336-amino-acid polypeptide reads, in one-letter code: Glycerol-3-phosphate dehydrogenase [NAD(P)+] (336 aa).

The NADPH site is built by S16, Y17, H37, and K111. Sn-glycerol 3-phosphate-binding residues include K111, G140, and T142. A144 contributes to the NADPH binding site. K196, D249, S259, R260, and N261 together coordinate sn-glycerol 3-phosphate. The active-site Proton acceptor is the K196. R260 is a binding site for NADPH. 2 residues coordinate NADPH: V284 and E286.

Belongs to the NAD-dependent glycerol-3-phosphate dehydrogenase family.

Its subcellular location is the cytoplasm. The catalysed reaction is sn-glycerol 3-phosphate + NAD(+) = dihydroxyacetone phosphate + NADH + H(+). The enzyme catalyses sn-glycerol 3-phosphate + NADP(+) = dihydroxyacetone phosphate + NADPH + H(+). The protein operates within membrane lipid metabolism; glycerophospholipid metabolism. Functionally, catalyzes the reduction of the glycolytic intermediate dihydroxyacetone phosphate (DHAP) to sn-glycerol 3-phosphate (G3P), the key precursor for phospholipid synthesis. This chain is Glycerol-3-phosphate dehydrogenase [NAD(P)+], found in Glaesserella parasuis serovar 5 (strain SH0165) (Haemophilus parasuis).